The primary structure comprises 300 residues: 4-hydroxy-tetrahydrodipicolinate synthase (300 aa).

Residue Thr-56 coordinates pyruvate. The active-site Proton donor/acceptor is Tyr-145. The active-site Schiff-base intermediate with substrate is the Lys-173. A pyruvate-binding site is contributed by Val-215.

Belongs to the DapA family. In terms of assembly, homotetramer; dimer of dimers.

It is found in the cytoplasm. The enzyme catalyses L-aspartate 4-semialdehyde + pyruvate = (2S,4S)-4-hydroxy-2,3,4,5-tetrahydrodipicolinate + H2O + H(+). It functions in the pathway amino-acid biosynthesis; L-lysine biosynthesis via DAP pathway; (S)-tetrahydrodipicolinate from L-aspartate: step 3/4. In terms of biological role, catalyzes the condensation of (S)-aspartate-beta-semialdehyde [(S)-ASA] and pyruvate to 4-hydroxy-tetrahydrodipicolinate (HTPA). The chain is 4-hydroxy-tetrahydrodipicolinate synthase from Prochlorococcus marinus (strain AS9601).